A 290-amino-acid polypeptide reads, in one-letter code: Transcription cofactor vestigial-like protein 4 (290 aa).

At Met-1 the chain carries N-acetylmethionine. The span at 17–30 shows a compositional bias: basic and acidic residues; that stretch reads ADDEKREAALRGEP. Disordered stretches follow at residues 17-65, 85-106, 140-161, and 254-290; these read ADDE…PGDE, LNKT…SPIE, LDAS…QQNR, and AAKD…SVVS. Ser-52 bears the Phosphoserine mark. Positions 92–105 are enriched in basic and acidic residues; the sequence is DCRRDPRERSRSPI. Ser-149 is modified (phosphoserine). Over residues 150 to 161 the composition is skewed to polar residues; the sequence is PTLTPGERQQNR. Residue Thr-153 is modified to Phosphothreonine. Residues 272-290 are compositionally biased toward low complexity; sequence PASPSAHMVSHSHSPSVVS. Residue Ser-274 is modified to Phosphoserine.

It belongs to the vestigial family. In terms of assembly, interacts with TEFs. Interacts with IRF2BP2.

It localises to the nucleus. May act as a specific coactivator for the mammalian TEFs. This is Transcription cofactor vestigial-like protein 4 from Homo sapiens (Human).